A 203-amino-acid chain; its full sequence is Large ribosomal subunit protein uL13 (203 aa).

Alanine 2 is subject to N-acetylalanine. The residue at position 59 (arginine 59) is a Citrulline. The residue at position 77 (serine 77) is a Phosphoserine; by ZIPK/DAPK3. Arginine 140 carries the citrulline modification. Lysine 191 is modified (N6-acetyllysine).

It belongs to the universal ribosomal protein uL13 family. As to quaternary structure, component of the 60S ribosome. Component of the GAIT complex. Interacts with EIF4G1. Phosphorylation at Ser-77 upon interferon-gamma treatment in monocytes involves a DAPK1-DAPK3 kinase cascade and is causing release from the ribosome, association with the GAIT complex and subsequent involvement in transcript-selective translation inhibition. Post-translationally, citrullinated by PADI4.

The protein localises to the cytoplasm. In terms of biological role, associated with ribosomes but is not required for canonical ribosome function and has extra-ribosomal functions. Component of the GAIT (gamma interferon-activated inhibitor of translation) complex which mediates interferon-gamma-induced transcript-selective translation inhibition in inflammation processes. Upon interferon-gamma activation and subsequent phosphorylation dissociates from the ribosome and assembles into the GAIT complex which binds to stem loop-containing GAIT elements in the 3'-UTR of diverse inflammatory mRNAs (such as ceruplasmin) and suppresses their translation. In the GAIT complex interacts with m7G cap-bound eIF4G at or near the eIF3-binding site and blocks the recruitment of the 43S ribosomal complex. Involved in methylation of rRNA. In Homo sapiens (Human), this protein is Large ribosomal subunit protein uL13 (RPL13A).